Consider the following 128-residue polypeptide: Small ribosomal subunit protein uS11 (128 aa).

Belongs to the universal ribosomal protein uS11 family. Part of the 30S ribosomal subunit. Interacts with proteins S7 and S18. Binds to IF-3.

Its function is as follows. Located on the platform of the 30S subunit, it bridges several disparate RNA helices of the 16S rRNA. Forms part of the Shine-Dalgarno cleft in the 70S ribosome. This chain is Small ribosomal subunit protein uS11, found in Synechococcus sp. (strain JA-3-3Ab) (Cyanobacteria bacterium Yellowstone A-Prime).